The sequence spans 220 residues: 7-cyano-7-deazaguanine synthase (220 aa).

10 to 20 (FSGGQDSTTCL) contributes to the ATP binding site. Residues C186, C195, C198, and C201 each coordinate Zn(2+).

It belongs to the QueC family. Homodimer. Zn(2+) serves as cofactor.

It catalyses the reaction 7-carboxy-7-deazaguanine + NH4(+) + ATP = 7-cyano-7-deazaguanine + ADP + phosphate + H2O + H(+). It functions in the pathway purine metabolism; 7-cyano-7-deazaguanine biosynthesis. Functionally, catalyzes the ATP-dependent conversion of 7-carboxy-7-deazaguanine (CDG) to 7-cyano-7-deazaguanine (preQ(0)). This chain is 7-cyano-7-deazaguanine synthase, found in Bacillus cereus (strain G9842).